Here is a 430-residue protein sequence, read N- to C-terminus: 3-phosphoshikimate 1-carboxyvinyltransferase (430 aa).

A disordered region spans residues 1–20 (MHATVSPSRVRGRARAPPSK). 3-phosphoshikimate-binding residues include Lys20, Ser21, and Arg25. A phosphoenolpyruvate-binding site is contributed by Lys20. Phosphoenolpyruvate is bound by residues Gly91 and Arg119. 3-phosphoshikimate-binding residues include Ser164, Ser165, Gln166, Ser192, Asp312, and Lys339. Position 166 (Gln166) interacts with phosphoenolpyruvate. Catalysis depends on Asp312, which acts as the Proton acceptor. Residues Arg343 and Arg386 each coordinate phosphoenolpyruvate.

This sequence belongs to the EPSP synthase family. Monomer.

The protein localises to the cytoplasm. The enzyme catalyses 3-phosphoshikimate + phosphoenolpyruvate = 5-O-(1-carboxyvinyl)-3-phosphoshikimate + phosphate. It functions in the pathway metabolic intermediate biosynthesis; chorismate biosynthesis. In terms of biological role, catalyzes the transfer of the enolpyruvyl moiety of phosphoenolpyruvate (PEP) to the 5-hydroxyl of shikimate-3-phosphate (S3P) to produce enolpyruvyl shikimate-3-phosphate and inorganic phosphate. The polypeptide is 3-phosphoshikimate 1-carboxyvinyltransferase (Halobacterium salinarum (strain ATCC 29341 / DSM 671 / R1)).